The following is a 224-amino-acid chain: Ribose-5-phosphate isomerase A (224 aa).

Substrate-binding positions include 26–29 (TGST), 82–85 (DGAD), and 95–98 (KGGG). Catalysis depends on Glu104, which acts as the Proton acceptor. Lys122 is a substrate binding site.

It belongs to the ribose 5-phosphate isomerase family. Homodimer.

It carries out the reaction aldehydo-D-ribose 5-phosphate = D-ribulose 5-phosphate. The protein operates within carbohydrate degradation; pentose phosphate pathway; D-ribose 5-phosphate from D-ribulose 5-phosphate (non-oxidative stage): step 1/1. In terms of biological role, catalyzes the reversible conversion of ribose-5-phosphate to ribulose 5-phosphate. This Streptococcus suis (strain 98HAH33) protein is Ribose-5-phosphate isomerase A.